The sequence spans 259 residues: Thiazole synthase (259 aa).

The active-site Schiff-base intermediate with DXP is the Lys-100. Residues Gly-161, 187–188, and 209–210 each bind 1-deoxy-D-xylulose 5-phosphate; these read AG and AS.

The protein belongs to the ThiG family. In terms of assembly, homotetramer. Forms heterodimers with either ThiH or ThiS.

The protein resides in the cytoplasm. The catalysed reaction is [ThiS sulfur-carrier protein]-C-terminal-Gly-aminoethanethioate + 2-iminoacetate + 1-deoxy-D-xylulose 5-phosphate = [ThiS sulfur-carrier protein]-C-terminal Gly-Gly + 2-[(2R,5Z)-2-carboxy-4-methylthiazol-5(2H)-ylidene]ethyl phosphate + 2 H2O + H(+). It functions in the pathway cofactor biosynthesis; thiamine diphosphate biosynthesis. Functionally, catalyzes the rearrangement of 1-deoxy-D-xylulose 5-phosphate (DXP) to produce the thiazole phosphate moiety of thiamine. Sulfur is provided by the thiocarboxylate moiety of the carrier protein ThiS. In vitro, sulfur can be provided by H(2)S. In Salinispora arenicola (strain CNS-205), this protein is Thiazole synthase.